An 84-amino-acid chain; its full sequence is Cell division topological specificity factor (84 aa).

Belongs to the MinE family.

Prevents the cell division inhibition by proteins MinC and MinD at internal division sites while permitting inhibition at polar sites. This ensures cell division at the proper site by restricting the formation of a division septum at the midpoint of the long axis of the cell. This is Cell division topological specificity factor from Paraburkholderia phymatum (strain DSM 17167 / CIP 108236 / LMG 21445 / STM815) (Burkholderia phymatum).